An 827-amino-acid chain; its full sequence is Centrosomal protein of 95 kDa (827 aa).

Disordered stretches follow at residues 115–145 (ISES…ERTE), 183–249 (GDTA…MVPS), 308–372 (FLTS…MSEK), 388–476 (LGDR…DSCH), and 489–558 (ELRK…KASP). The span at 123–145 (SETEQYSKDSHGEEAGEDLERTE) shows a compositional bias: basic and acidic residues. Residues 187–199 (HTFSQRSNGAQNS) are compositionally biased toward polar residues. Basic and acidic residues-rich tracts occupy residues 327–343 (EATR…DENR) and 360–372 (PLTE…MSEK). A phosphoserine mark is found at S447, S449, and S451. 2 coiled-coil regions span residues 584 to 633 (LTKM…VKKE) and 701 to 795 (LQIQ…DDDA).

It localises to the cytoplasm. Its subcellular location is the cytoskeleton. The protein resides in the microtubule organizing center. It is found in the centrosome. The protein localises to the spindle pole. The polypeptide is Centrosomal protein of 95 kDa (Cep95) (Mus musculus (Mouse)).